The primary structure comprises 167 residues: uncharacterized protein (167 aa).

This is an uncharacterized protein from Acidianus convivator (ATV).